Consider the following 118-residue polypeptide: Small ribosomal subunit protein uS17 (118 aa).

The protein belongs to the universal ribosomal protein uS17 family. In terms of assembly, part of the 30S ribosomal subunit.

Functionally, one of the primary rRNA binding proteins, it binds specifically to the 5'-end of 16S ribosomal RNA. The chain is Small ribosomal subunit protein uS17 from Methanopyrus kandleri (strain AV19 / DSM 6324 / JCM 9639 / NBRC 100938).